An 877-amino-acid chain; its full sequence is Telomere length regulation protein clk-2 (877 aa).

Positions 488–501 are enriched in polar residues; that stretch reads NKDSAAITSKNNLR. The tract at residues 488 to 509 is disordered; sequence NKDSAAITSKNNLRLDSDDDED.

Belongs to the TEL2 family.

Its subcellular location is the nucleus. The protein localises to the chromosome. It is found in the telomere. Functionally, DNA damage checkpoint protein required for DNA damage-induced cell cycle arrest and apoptosis, thereby playing a role in genome stability. Regulator of telomere length. The chain is Telomere length regulation protein clk-2 (clk-2) from Caenorhabditis elegans.